The following is a 732-amino-acid chain: Catalase-peroxidase (732 aa).

A signal peptide spans 1-45 (MDTKVDNAGKCPVVHTHTAHGGRSNRDWWPNQLNLRILHQNSSLS). The segment at residues 97–220 (WHSAGTYRTG…LSAVQMGLIY (124 aa)) is a cross-link (tryptophyl-tyrosyl-methioninium (Trp-Tyr) (with M-246)). H98 acts as the Proton acceptor in catalysis. Positions 220–246 (YVNPEGPNGNPDPLAAARDIRETFARM) form a cross-link, tryptophyl-tyrosyl-methioninium (Tyr-Met) (with W-97). Residue H261 participates in heme b binding.

Belongs to the peroxidase family. Peroxidase/catalase subfamily. In terms of assembly, homodimer or homotetramer. Heme b is required as a cofactor. Post-translationally, formation of the three residue Trp-Tyr-Met cross-link is important for the catalase, but not the peroxidase activity of the enzyme.

It catalyses the reaction H2O2 + AH2 = A + 2 H2O. The catalysed reaction is 2 H2O2 = O2 + 2 H2O. Functionally, bifunctional enzyme with both catalase and broad-spectrum peroxidase activity. This is Catalase-peroxidase from Rhizobium rhizogenes (strain K84 / ATCC BAA-868) (Agrobacterium radiobacter).